We begin with the raw amino-acid sequence, 154 residues long: Ribonuclease 8 (154 aa).

The N-terminal stretch at 1-27 is a signal peptide; it reads MAPARAGCCALLLLLLGLWVAEIPVSA. His-42 serves as the catalytic Proton acceptor. Intrachain disulfides connect Cys-64–Cys-118, Cys-82–Cys-133, and Cys-89–Cys-96. Residues 65 to 69 and Lys-90 each bind substrate; that span reads KDLNT. The active-site Proton donor is the His-149.

The protein belongs to the pancreatic ribonuclease family.

It is found in the secreted. Has a low ribonuclease activity. The chain is Ribonuclease 8 (RNASE8) from Pongo pygmaeus (Bornean orangutan).